The primary structure comprises 468 residues: ATP synthase subunit beta (468 aa).

Residue 155–162 (GGAGVGKT) coordinates ATP.

Belongs to the ATPase alpha/beta chains family. As to quaternary structure, F-type ATPases have 2 components, CF(1) - the catalytic core - and CF(0) - the membrane proton channel. CF(1) has five subunits: alpha(3), beta(3), gamma(1), delta(1), epsilon(1). CF(0) has three main subunits: a(1), b(2) and c(9-12). The alpha and beta chains form an alternating ring which encloses part of the gamma chain. CF(1) is attached to CF(0) by a central stalk formed by the gamma and epsilon chains, while a peripheral stalk is formed by the delta and b chains.

The protein localises to the cell membrane. The catalysed reaction is ATP + H2O + 4 H(+)(in) = ADP + phosphate + 5 H(+)(out). In terms of biological role, produces ATP from ADP in the presence of a proton gradient across the membrane. The catalytic sites are hosted primarily by the beta subunits. This chain is ATP synthase subunit beta, found in Bacillus cereus (strain G9842).